We begin with the raw amino-acid sequence, 525 residues long: Bifunctional purine biosynthesis protein PurH (525 aa).

One can recognise an MGS-like domain in the interval 10–156 (HRIPIRRALV…KNHPSVAIVT (147 aa)).

It belongs to the PurH family.

It catalyses the reaction (6R)-10-formyltetrahydrofolate + 5-amino-1-(5-phospho-beta-D-ribosyl)imidazole-4-carboxamide = 5-formamido-1-(5-phospho-D-ribosyl)imidazole-4-carboxamide + (6S)-5,6,7,8-tetrahydrofolate. It carries out the reaction IMP + H2O = 5-formamido-1-(5-phospho-D-ribosyl)imidazole-4-carboxamide. Its pathway is purine metabolism; IMP biosynthesis via de novo pathway; 5-formamido-1-(5-phospho-D-ribosyl)imidazole-4-carboxamide from 5-amino-1-(5-phospho-D-ribosyl)imidazole-4-carboxamide (10-formyl THF route): step 1/1. It functions in the pathway purine metabolism; IMP biosynthesis via de novo pathway; IMP from 5-formamido-1-(5-phospho-D-ribosyl)imidazole-4-carboxamide: step 1/1. The protein is Bifunctional purine biosynthesis protein PurH of Nocardioides sp. (strain ATCC BAA-499 / JS614).